The primary structure comprises 1080 residues: MSTSQSLNIIPIEYSLQTYQRSNQDTSMLHRPVVKEGEWVQAGDLLSDCASSIGGEFSIGQNILIAYLPWEGYNYEDAILISERLVYDDLYTSIHIERYDISTEKNPYGIEKITKDIVLLKDTTELNHLDKNGIAQLGAWLKEGDILVGKITPTESKKEVARYVQLYNDILGKKINYAIRDSSLRVPRGLEAKVIRVKTFPERKNETKNWENKIGLKSKALAFSVQHFLSKNQSNKKRTLSLKSKWEKETSLSSFSSLAWQKKSPLFFVFKNGIFEKLKNFPKKKKKNERVFALKKKSSKKFRFFELQKKFRFFFRNFFFFKAPKKKSPLFFFFKSETFDKERNFQKMSPNQSKQNWVKISIKKEWQKVGSFGKKKASKGKISFFPSFPQASLVGKASFFSPSRFEKKRDASNFLKSSCISSVHIYLAEKRKVQVGDKMAGRHGNKGIISQILPRQDMPYLPDGTPIDMALNPLGVPSRMNVGQIYECLLGLAGKHLGEQYRIQPFDEAFGPEASRSFVFSKLYSAKTKTGQSWLFQPTNPGKLKLFDGRTGNCFDQAITTGYSYMIKLVHLVDEKIHCLTVDHEVLTTKGWIPLNKVKTSHFVATLKKNGQLVYQNPTNIYHYPEFKGELYHIKNVNLDLLVTLNHRMYVKNGIIEATSSVDYQLIPAKDIVGQHKKYCKTAFWDKENYQFILPSVISNSIVIPEKTMNMEAWLQFFGIWIAEGWALTNTISNNNVTNFNQSSSSPYVVQISIKKKKVLEILNNVIPILGYSFNYYDNNITICDKQLWAYLRPLSLGNPYRKLPIWVWDLSQDQARVLLLAMITVFKNGTNSKWEKAASLSSRLSLASVFPEFLKKRIDKGLSYYTSSVELADDISRLALHAGWSGNNYLLKKKGSISSFDGKQIICQFDIWRISIIQSKNQPAVNHGYHSKGKEEVLPYQGAVYCLSVPNEIFYVRRNGLSVWTGNSRSSGPYSLITQQPLKGRSKHGGQRLGEMEVWAIEAYGAAFTLLELLTIKSDDVTGRLTIWDYVLYKKPLYIGTPASFKVLICELQALCLDIGIYKADKSNILKQINVSSMG.

The protein belongs to the RNA polymerase beta chain family. In plastids the minimal PEP RNA polymerase catalytic core is composed of four subunits: alpha, beta, beta', and beta''. When a (nuclear-encoded) sigma factor is associated with the core the holoenzyme is formed, which can initiate transcription.

The protein resides in the plastid. Its subcellular location is the chloroplast. The enzyme catalyses RNA(n) + a ribonucleoside 5'-triphosphate = RNA(n+1) + diphosphate. Functionally, DNA-dependent RNA polymerase catalyzes the transcription of DNA into RNA using the four ribonucleoside triphosphates as substrates. This Stigeoclonium helveticum (Green alga) protein is DNA-directed RNA polymerase subunit beta C-terminal section (rpoB2).